The sequence spans 188 residues: Adenine phosphoribosyltransferase (188 aa).

134-138 (ATGGS) is a binding site for AMP.

Belongs to the purine/pyrimidine phosphoribosyltransferase family. Homodimer. Requires Mg(2+) as cofactor.

Its subcellular location is the cytoplasm. It is found in the nucleus. The enzyme catalyses AMP + diphosphate = 5-phospho-alpha-D-ribose 1-diphosphate + adenine. It functions in the pathway purine metabolism; AMP biosynthesis via salvage pathway; AMP from adenine: step 1/1. Functionally, catalyzes a salvage reaction resulting in the formation of AMP, that is energically less costly than de novo synthesis. This is Adenine phosphoribosyltransferase (APT1) from Candida albicans (strain SC5314 / ATCC MYA-2876) (Yeast).